A 357-amino-acid chain; its full sequence is Intracellular hyaluronan-binding protein 4 (357 aa).

3 disordered regions span residues 56-116 (VVAR…HKTA), 150-186 (ERPR…KREF), and 313-357 (PGCG…PALT). A compositionally biased stretch (basic and acidic residues) spans 96–115 (PKQEECGGKDNSRAEKEHKT). Gly residues predominate over residues 155–171 (CGRGRGGMQGRGRGGGI). Residues 176 to 186 (DGFDQRGKREF) are compositionally biased toward basic and acidic residues. Acidic residues predominate over residues 348 to 357 (DDPEDFPALT).

It belongs to the SERBP1-HABP4 family. Associates with ribosomes; promoting ribosome stabilization. Interacts with EEF2/eEF2; promoting ribosome stabilization.

Its subcellular location is the nucleus. The protein localises to the cytoplasm. The protein resides in the stress granule. It is found in the sarcoplasm. It localises to the nuclear body. Its subcellular location is the nucleolus. The protein localises to the nucleus speckle. The protein resides in the cajal body. It is found in the gem. Its function is as follows. Ribosome-binding protein that promotes ribosome hibernation, a process during which ribosomes are stabilized in an inactive state and preserved from proteasomal degradation. Acts via its association with EEF2/eEF2 factor at the A-site of the ribosome, promoting ribosome stabilization in an inactive state compatible with storage. Plays a key role in ribosome hibernation in the mature egg by promoting ribosome stabilization. Ribosomes, which are produced in large quantities during oogenesis, are stored and translationally repressed in the egg and early embryo. The protein is Intracellular hyaluronan-binding protein 4 of Gallus gallus (Chicken).